Consider the following 355-residue polypeptide: Iron deficiency-induced protein A (355 aa).

Residues 1–34 (MEKVGRRVFLGMGAAATAYVTHHLWNQNAESSYA) constitute a signal peptide (tat-type signal). His-49, Tyr-50, Tyr-180, Tyr-236, and Tyr-237 together coordinate Fe cation.

Belongs to the bacterial solute-binding protein 1 family. Post-translationally, predicted to be exported by the Tat system. The position of the signal peptide cleavage has not been experimentally proven.

The protein localises to the cellular thylakoid membrane. Plays an important role in protecting the acceptor side of photosystem II (PSII) against oxidative damage, especially under iron-limiting growth conditions. In terms of biological role, may also be part of a periplasmic ABC transporter complex involved in iron import. This is Iron deficiency-induced protein A (idiA) from Thermosynechococcus vestitus (strain NIES-2133 / IAM M-273 / BP-1).